We begin with the raw amino-acid sequence, 85 residues long: UPF0297 protein Clos_1665 (85 aa).

This sequence belongs to the UPF0297 family.

The sequence is that of UPF0297 protein Clos_1665 from Alkaliphilus oremlandii (strain OhILAs) (Clostridium oremlandii (strain OhILAs)).